The following is a 160-amino-acid chain: Transcription elongation factor GreA (160 aa).

Residues 10 to 37 adopt a coiled-coil conformation; it reads TLDGKAKLENELQELKTVKRKEVVERIK.

Belongs to the GreA/GreB family.

Its function is as follows. Necessary for efficient RNA polymerase transcription elongation past template-encoded arresting sites. The arresting sites in DNA have the property of trapping a certain fraction of elongating RNA polymerases that pass through, resulting in locked ternary complexes. Cleavage of the nascent transcript by cleavage factors such as GreA or GreB allows the resumption of elongation from the new 3'terminus. GreA releases sequences of 2 to 3 nucleotides. In Listeria innocua serovar 6a (strain ATCC BAA-680 / CLIP 11262), this protein is Transcription elongation factor GreA.